We begin with the raw amino-acid sequence, 320 residues long: ATP-dependent 6-phosphofructokinase (320 aa).

ATP is bound at residue G11. R21–K25 contacts ADP. ATP-binding positions include R72 to F73 and G102 to S105. Mg(2+) is bound at residue D103. T125 to D127 serves as a coordination point for substrate. Catalysis depends on D127, which acts as the Proton acceptor. R154 serves as a coordination point for ADP. Substrate-binding positions include R162 and M169–R171. ADP contacts are provided by residues G185 to D187 and K213 to H215. Residues E222, R243, and H249–R252 each bind substrate.

This sequence belongs to the phosphofructokinase type A (PFKA) family. ATP-dependent PFK group I subfamily. Prokaryotic clade 'B1' sub-subfamily. Homotetramer. Mg(2+) serves as cofactor.

The protein resides in the cytoplasm. It carries out the reaction beta-D-fructose 6-phosphate + ATP = beta-D-fructose 1,6-bisphosphate + ADP + H(+). It functions in the pathway carbohydrate degradation; glycolysis; D-glyceraldehyde 3-phosphate and glycerone phosphate from D-glucose: step 3/4. With respect to regulation, allosterically activated by ADP and other diphosphonucleosides, and allosterically inhibited by phosphoenolpyruvate. Its function is as follows. Catalyzes the phosphorylation of D-fructose 6-phosphate to fructose 1,6-bisphosphate by ATP, the first committing step of glycolysis. This is ATP-dependent 6-phosphofructokinase from Lactobacillus acidophilus (strain ATCC 700396 / NCK56 / N2 / NCFM).